Here is a 214-residue protein sequence, read N- to C-terminus: MKFFIDTADVKEIRQAHDLGLVDGVTTNPSLIAKSGRKFEDVIKEITEIVDGPISAEVVSLEAAGMIREAGELAKIHKNIVIKLPMTPEGLKACAALTREGIKTNVTLIFTPMQALLAAKAGATYVSPFVGRLDDISQDGMGIIDDIKTIFDNYGYQSEIIVASVRNPVHVLNAALIGADIATIPYSVMLQLAKHPLTDSGIERFLKDWESVPK.

The active-site Schiff-base intermediate with substrate is Lys83.

This sequence belongs to the transaldolase family. Type 3B subfamily.

It localises to the cytoplasm. It catalyses the reaction D-sedoheptulose 7-phosphate + D-glyceraldehyde 3-phosphate = D-erythrose 4-phosphate + beta-D-fructose 6-phosphate. It participates in carbohydrate degradation; pentose phosphate pathway; D-glyceraldehyde 3-phosphate and beta-D-fructose 6-phosphate from D-ribose 5-phosphate and D-xylulose 5-phosphate (non-oxidative stage): step 2/3. In terms of biological role, transaldolase is important for the balance of metabolites in the pentose-phosphate pathway. The polypeptide is Probable transaldolase (Geobacter sulfurreducens (strain ATCC 51573 / DSM 12127 / PCA)).